The sequence spans 445 residues: Tubby-like F-box protein 14 (445 aa).

Residues 56–114 (SSCWANLPPELLRDVIERLEASEAAWPSRKNVVACAAVCRTWRDMCREIVKNPEFCGKI) enclose the F-box domain.

It belongs to the TUB family. Ubiquitous.

The protein is Tubby-like F-box protein 14 (TULP14) of Oryza sativa subsp. japonica (Rice).